Reading from the N-terminus, the 465-residue chain is Asparagine--tRNA ligase (465 aa).

It belongs to the class-II aminoacyl-tRNA synthetase family. In terms of assembly, homodimer.

It localises to the cytoplasm. It catalyses the reaction tRNA(Asn) + L-asparagine + ATP = L-asparaginyl-tRNA(Asn) + AMP + diphosphate + H(+). The polypeptide is Asparagine--tRNA ligase (Pseudoalteromonas atlantica (strain T6c / ATCC BAA-1087)).